The sequence spans 505 residues: Maturase K (505 aa).

The protein belongs to the intron maturase 2 family. MatK subfamily.

Its subcellular location is the plastid. It is found in the chloroplast. Its function is as follows. Usually encoded in the trnK tRNA gene intron. Probably assists in splicing its own and other chloroplast group II introns. The polypeptide is Maturase K (Calycanthus occidentalis (Spice bush)).